We begin with the raw amino-acid sequence, 843 residues long: Eisosome protein 1 (843 aa).

Residues 1–53 (MSLISAVEDRDIHNIGKTSGGGSRTSSITSSKKSLKHGSKSLRKPKVYQTTGE) form a disordered region. N-acetylserine is present on serine 2. Serine 2 carries the post-translational modification Phosphoserine. The segment covering 33–46 (KSLKHGSKSLRKPK) has biased composition (basic residues). Serine 88 and serine 130 each carry phosphoserine. The interval 120-174 (KMGPKVVRNNSITSATSKTSKESQTKRKSKESPGAAASKAYSMTMETTSLSSQTN) is disordered. Polar residues-rich tracts occupy residues 127–137 (RNNSITSATSK) and 163–174 (TMETTSLSSQTN). Phosphoserine occurs at positions 182, 401, 584, and 710. The tract at residues 717–843 (DLPTQLEKIE…QDAISNQEKK (127 aa)) is disordered. Residue threonine 720 is modified to Phosphothreonine. Positions 752 to 764 (STAAKEATETSSA) are enriched in low complexity. 2 positions are modified to phosphoserine: serine 763 and serine 775. Over residues 781–797 (SGKEDANDCKSAEHSKE) the composition is skewed to basic and acidic residues. The segment covering 798 to 810 (ISVSQKAGNNKSL) has biased composition (polar residues). Phosphoserine occurs at positions 816, 828, 829, and 838.

The protein belongs to the EIS1 family.

It is found in the cytoplasmic granule. The protein localises to the cell membrane. Its function is as follows. Required for normal formation of eisosomes, large cytoplasmic protein assemblies that localize to specialized domains on plasma membrane and mark the site of endocytosis. This is Eisosome protein 1 (EIS1) from Saccharomyces cerevisiae (strain ATCC 204508 / S288c) (Baker's yeast).